A 134-amino-acid polypeptide reads, in one-letter code: Profilin-3 (134 aa).

Residues Cys13 and Cys118 are joined by a disulfide bond. The Involved in PIP2 interaction signature appears at Ala84 to Thr100.

It belongs to the profilin family. In terms of assembly, occurs in many kinds of cells as a complex with monomeric actin in a 1:1 ratio. In terms of processing, phosphorylated by MAP kinases.

It localises to the cytoplasm. It is found in the cytoskeleton. Binds to actin and affects the structure of the cytoskeleton. At high concentrations, profilin prevents the polymerization of actin, whereas it enhances it at low concentrations. In Olea europaea (Common olive), this protein is Profilin-3.